The primary structure comprises 935 residues: Protocadherin gamma-A11 (935 aa).

The first 29 residues, M1–A29, serve as a signal peptide directing secretion. 6 Cadherin domains span residues R30–F134, Q135–F243, T244–I348, T349–F453, P454–I563, and D571–G677. Residues R30–Y693 lie on the Extracellular side of the membrane. The N-linked (GlcNAc...) asparagine glycan is linked to N48. N255, N266, N420, and N546 each carry an N-linked (GlcNAc...) asparagine glycan. A helical transmembrane segment spans residues L694 to A714. At L715–K935 the chain is on the cytoplasmic side. Disordered stretches follow at residues C805–N844 and A905–K935. A compositionally biased stretch (polar residues) spans P807–N844. Positions N925 to K935 are enriched in basic residues.

The protein localises to the cell membrane. Its function is as follows. Potential calcium-dependent cell-adhesion protein. May be involved in the establishment and maintenance of specific neuronal connections in the brain. This chain is Protocadherin gamma-A11 (PCDHGA11), found in Pan troglodytes (Chimpanzee).